The following is a 635-amino-acid chain: Threonine--tRNA ligase (635 aa).

One can recognise a TGS domain in the interval 1–61 (MIAITLPDGS…DRDVALAIIT (61 aa)). The catalytic stretch occupies residues 242-533 (DHRKLGKSLD…LLENHAGALP (292 aa)). 3 residues coordinate Zn(2+): C333, H384, and H510.

Belongs to the class-II aminoacyl-tRNA synthetase family. In terms of assembly, homodimer. Requires Zn(2+) as cofactor.

It is found in the cytoplasm. It catalyses the reaction tRNA(Thr) + L-threonine + ATP = L-threonyl-tRNA(Thr) + AMP + diphosphate + H(+). Functionally, catalyzes the attachment of threonine to tRNA(Thr) in a two-step reaction: L-threonine is first activated by ATP to form Thr-AMP and then transferred to the acceptor end of tRNA(Thr). Also edits incorrectly charged L-seryl-tRNA(Thr). In Cupriavidus pinatubonensis (strain JMP 134 / LMG 1197) (Cupriavidus necator (strain JMP 134)), this protein is Threonine--tRNA ligase.